A 179-amino-acid chain; its full sequence is Phosphopantetheine adenylyltransferase (179 aa).

Residue Ser23 participates in substrate binding. ATP contacts are provided by residues 23 to 24 (SF) and His31. Substrate is bound by residues Lys55, Ala87, and Arg101. ATP contacts are provided by residues 102 to 104 (GIR), Glu112, and 137 to 143 (FAHVSSS).

It belongs to the bacterial CoaD family. Homohexamer. Requires Mg(2+) as cofactor.

Its subcellular location is the cytoplasm. It catalyses the reaction (R)-4'-phosphopantetheine + ATP + H(+) = 3'-dephospho-CoA + diphosphate. It participates in cofactor biosynthesis; coenzyme A biosynthesis; CoA from (R)-pantothenate: step 4/5. Its function is as follows. Reversibly transfers an adenylyl group from ATP to 4'-phosphopantetheine, yielding dephospho-CoA (dPCoA) and pyrophosphate. The polypeptide is Phosphopantetheine adenylyltransferase (Rhodopirellula baltica (strain DSM 10527 / NCIMB 13988 / SH1)).